A 301-amino-acid chain; its full sequence is Sulfate adenylyltransferase subunit 2 (301 aa).

Belongs to the PAPS reductase family. CysD subfamily. As to quaternary structure, heterodimer composed of CysD, the smaller subunit, and CysN.

It catalyses the reaction sulfate + ATP + H(+) = adenosine 5'-phosphosulfate + diphosphate. The protein operates within sulfur metabolism; hydrogen sulfide biosynthesis; sulfite from sulfate: step 1/3. With CysN forms the ATP sulfurylase (ATPS) that catalyzes the adenylation of sulfate producing adenosine 5'-phosphosulfate (APS) and diphosphate, the first enzymatic step in sulfur assimilation pathway. APS synthesis involves the formation of a high-energy phosphoric-sulfuric acid anhydride bond driven by GTP hydrolysis by CysN coupled to ATP hydrolysis by CysD. This chain is Sulfate adenylyltransferase subunit 2, found in Geotalea daltonii (strain DSM 22248 / JCM 15807 / FRC-32) (Geobacter daltonii).